We begin with the raw amino-acid sequence, 926 residues long: Disease resistance protein RPM1 (926 aa).

A leucine-zipper region spans residues 10–45 (IGRILSVLENETLLLSGVHGEIDKMKKELLIMKSFL). The region spanning 153 to 467 (DAKWVNNISE…AQRFVEPIRG (315 aa)) is the NB-ARC domain. 200–207 (GMGGSGKT) is a binding site for ATP. LRR repeat units lie at residues 561–580 (LHSL…LPSL), 581–603 (NLLR…LVTM), 605–625 (NLKY…NFHK), 626–649 (LVNL…MWKL), 686–707 (LQVM…CMTQ), 708–731 (LTRI…LNKI), 756–777 (TASI…WFNT), 778–804 (LQNL…TLPR), 825–836 (FQNLKILEIVQM), 837–859 (KHLT…YVRA), and 876–900 (LQEL…SVDR).

The protein belongs to the disease resistance NB-LRR family. Interacts directly with RIN4 via its N-terminal region. Interacts (via N-terminus) with RIN2 and RIN3 (via C-terminus). Interacts with TIP49A, a protein known to interact with the TATA binding protein complex (TBP). Binds to MORC1/CRT1. Interacts, via its NB-ARC domain, with RIN13.

It localises to the endomembrane system. Its subcellular location is the cell membrane. In terms of biological role, disease resistance (R) protein that specifically recognizes the AvrRpm1 type III effector avirulence protein from Pseudomonas syringae. Resistance proteins guard the plant against pathogens that contain an appropriate avirulence protein via an indirect interaction with this avirulence protein. That triggers a defense system including the hypersensitive response (HR), which restricts the pathogen growth. Acts via its interaction with RIN4, and probably triggers the plant resistance when RIN4 is phosphorylated by AvrRpm1. It is then degraded at the onset of the hypersensitive response. This chain is Disease resistance protein RPM1, found in Arabidopsis thaliana (Mouse-ear cress).